A 65-amino-acid chain; its full sequence is MPKVIEAVYENGVFKPLQKVDLKEGEKVKVELKESVVESVAGILKVSDEKVKKALEMIEYGEDIY.

It belongs to the UPF0165 family.

Its function is as follows. Possibly the antitoxin component of a type II toxin-antitoxin (TA) system. Its cognate toxin is VapC7 (Potential). The sequence is that of Putative antitoxin VapB7 (vapB7) from Archaeoglobus fulgidus (strain ATCC 49558 / DSM 4304 / JCM 9628 / NBRC 100126 / VC-16).